The primary structure comprises 354 residues: UPF0496 protein At4g34330 (354 aa).

The next 2 membrane-spanning stretches (helical) occupy residues Ile200–Ala220 and Pro222–Ile242. A coiled-coil region spans residues Ala270 to Thr341.

Belongs to the UPF0496 family.

It localises to the membrane. This chain is UPF0496 protein At4g34330, found in Arabidopsis thaliana (Mouse-ear cress).